The primary structure comprises 175 residues: Crossover junction endodeoxyribonuclease RuvC (175 aa).

Residues Asp7, Glu68, and Asp141 contribute to the active site. Asp7, Glu68, and Asp141 together coordinate Mg(2+).

Belongs to the RuvC family. Homodimer which binds Holliday junction (HJ) DNA. The HJ becomes 2-fold symmetrical on binding to RuvC with unstacked arms; it has a different conformation from HJ DNA in complex with RuvA. In the full resolvosome a probable DNA-RuvA(4)-RuvB(12)-RuvC(2) complex forms which resolves the HJ. It depends on Mg(2+) as a cofactor.

It is found in the cytoplasm. The catalysed reaction is Endonucleolytic cleavage at a junction such as a reciprocal single-stranded crossover between two homologous DNA duplexes (Holliday junction).. In terms of biological role, the RuvA-RuvB-RuvC complex processes Holliday junction (HJ) DNA during genetic recombination and DNA repair. Endonuclease that resolves HJ intermediates. Cleaves cruciform DNA by making single-stranded nicks across the HJ at symmetrical positions within the homologous arms, yielding a 5'-phosphate and a 3'-hydroxyl group; requires a central core of homology in the junction. The consensus cleavage sequence is 5'-(A/T)TT(C/G)-3'. Cleavage occurs on the 3'-side of the TT dinucleotide at the point of strand exchange. HJ branch migration catalyzed by RuvA-RuvB allows RuvC to scan DNA until it finds its consensus sequence, where it cleaves and resolves the cruciform DNA. The protein is Crossover junction endodeoxyribonuclease RuvC of Salinispora arenicola (strain CNS-205).